A 173-amino-acid polypeptide reads, in one-letter code: Gamma-crystallin S-2 (173 aa).

Beta/gamma crystallin 'Greek key' domains are found at residues 2–40 (GKII…RVES) and 41–83 (DWWV…RVPT). The segment at 84 to 88 (HTQRP) is connecting peptide. 2 consecutive Beta/gamma crystallin 'Greek key' domains span residues 89–129 (YRMR…HVMG) and 130–172 (AYWI…RRIM).

The protein belongs to the beta/gamma-crystallin family.

Crystallins are the dominant structural components of the vertebrate eye lens. This Chiloscyllium indicum (Slender bamboo shark) protein is Gamma-crystallin S-2 (GS-2).